A 401-amino-acid polypeptide reads, in one-letter code: Methyltransferase cfoC (401 aa).

Position 268 (Asp-268) interacts with S-adenosyl-L-methionine. The active-site Proton acceptor is the His-308.

It belongs to the class I-like SAM-binding methyltransferase superfamily. Cation-independent O-methyltransferase family.

The protein operates within secondary metabolite biosynthesis; flavonoid biosynthesis. In terms of biological role, methyltransferase; part of the gene cluster that mediates the biosynthesis of chlorflavonin, a fungal flavonoid with acetolactate synthase inhibitory activity. Within the pathway, cfoC is responsible for the methylation at position C8-OH of flavonoid. The pathway begins with the PKS-NRPS hybrid synthetase cfoA that uses benzoic acid or p-hydroxybenzoic acid as a starter unit with four rounds of chain elongation using malonyl-CoA to form the chalcone skeleton. Then, a new type of chalcone isomerase, cfoK, catalyzes the conversion of the chalcone into a flavanone by a histidine-mediated oxa-Michael addition mechanism. The desaturation of flavanone to flavone is catalyzed by a new type of flavone synthase, the flavin mononucleotide (FMN)-dependent oxidoreductase cfoJ. Monooxygenases cfoF, cfoG, and P450 cfoH are responsible for the hydroxylation of the flavonoid skeleton at sites C3, C8, and C2', respectively. Like cfoF, the dehydratase cfoI also plays a role in the hydroxylation of position C3. Methyltransferases cfoB, cfoC, and cfoD then catalyze the methylation of C7-OH, C8-OH, and C3-OH, respectively. Finally, the monooxygenase cfoE is responsible for the chlorination of flavonoid at position C3'. In Aspergillus candidus, this protein is Methyltransferase cfoC.